Reading from the N-terminus, the 176-residue chain is MSKKDTEHDDDFALFKDAVQGVKKLRQDTIIQQPKKNTKQKEITRSNREASDSEFYFSDEFVPLLNADGPTRYARDDVSTYEVKRLRRGVYVPDVFLDMHGMTQQEAKRELGAMIAYCVKNEIHCACVQHGIGKHILKQKAPLWLAQHPDVMAFHQAPLEFGGDGALLVLLSIPEK.

The Smr domain maps to 97-172; the sequence is LDMHGMTQQE…GDGALLVLLS (76 aa).

Belongs to the SmrB family. As to quaternary structure, associates with collided ribosomes, but not with correctly translating polysomes.

Acts as a ribosome collision sensor. Detects stalled/collided disomes (pairs of ribosomes where the leading ribosome is stalled and a second ribosome has collided with it) and endonucleolytically cleaves mRNA at the 5' boundary of the stalled ribosome. Stalled/collided disomes form a new interface (primarily via the 30S subunits) that binds SmrB. Cleaved mRNA becomes available for tmRNA ligation, leading to ribosomal subunit dissociation and rescue of stalled ribosomes. In Vibrio campbellii (strain ATCC BAA-1116), this protein is Ribosome rescue factor SmrB.